The chain runs to 158 residues: NAD(P)H-quinone oxidoreductase subunit J, chloroplastic (158 aa).

The protein belongs to the complex I 30 kDa subunit family. NDH is composed of at least 16 different subunits, 5 of which are encoded in the nucleus.

The protein localises to the plastid. It localises to the chloroplast thylakoid membrane. The catalysed reaction is a plastoquinone + NADH + (n+1) H(+)(in) = a plastoquinol + NAD(+) + n H(+)(out). It catalyses the reaction a plastoquinone + NADPH + (n+1) H(+)(in) = a plastoquinol + NADP(+) + n H(+)(out). NDH shuttles electrons from NAD(P)H:plastoquinone, via FMN and iron-sulfur (Fe-S) centers, to quinones in the photosynthetic chain and possibly in a chloroplast respiratory chain. The immediate electron acceptor for the enzyme in this species is believed to be plastoquinone. Couples the redox reaction to proton translocation, and thus conserves the redox energy in a proton gradient. This is NAD(P)H-quinone oxidoreductase subunit J, chloroplastic from Capsella bursa-pastoris (Shepherd's purse).